A 486-amino-acid polypeptide reads, in one-letter code: Recombining binding protein suppressor of hairless (486 aa).

DNA-binding regions lie at residues 43–53 (QKSYGNEKRFF) and 151–156 (SKPSKK). Lysine 161 carries the N6-acetyllysine modification. The DNA-binding stretch occupies residues 178–183 (RLRSQT). Residues 341–431 (PVVESLQLNG…YSTSLTFTYT (91 aa)) form the IPT/TIG domain. The segment covering 451 to 467 (SSQVPPNESNTNSEGSY) has biased composition (polar residues). Residues 451–486 (SSQVPPNESNTNSEGSYTNASTNSTSVTSSTATVVS) are disordered. A compositionally biased stretch (low complexity) spans 468-486 (TNASTNSTSVTSSTATVVS).

It belongs to the Su(H) family. Interacts with activated NOTCH1, NOTCH2 or NOTCH3. Interacts with MINT/SHARP. This interaction may mediate the recruitment of large corepressor complexes containing proteins such as HDAC1, HDAC2, NCOR2, SAP30, FHL1/KYOT2 and CIR1. Interacts with EP300, MAML1 and PTF1A. Interacts with RITA1, leading to nuclear export, prevent the interaction between RBPJ and NICD product and subsequent down-regulation of the Notch signaling pathway. Interacts with SNW1. Interacts with CHCHD2 and CXXC5. Interacts with BEND6 (via BEN domain). Interacts with NKAPL. Interacts with ZMIZ1. Interacts with RBM15. Interacts with L3MBTL3 and KDM1A; the interaction with KDM1A is weaker in the absence of L3MBTL3 and the interaction with L3MBTL3 is impaired by Notch-derived peptides containing the intracellular domain (NICD).

It is found in the nucleus. It localises to the cytoplasm. Functionally, transcriptional regulator that plays a central role in Notch signaling, a signaling pathway involved in cell-cell communication that regulates a broad spectrum of cell-fate determinations. Acts as a transcriptional repressor when it is not associated with Notch proteins. When associated with some NICD product of Notch proteins (Notch intracellular domain), it acts as a transcriptional activator that activates transcription of Notch target genes. Probably represses or activates transcription via the recruitment of chromatin remodeling complexes containing histone deacetylase or histone acetylase proteins, respectively. Specifically binds to the immunoglobulin kappa-type J segment recombination signal sequence. Binds specifically to methylated DNA. Binds to the oxygen responsive element of COX4I2 and activates its transcription under hypoxia conditions (4% oxygen). Negatively regulates the phagocyte oxidative burst in response to bacterial infection by repressing transcription of NADPH oxidase subunits. The chain is Recombining binding protein suppressor of hairless (RBPJ) from Pongo abelii (Sumatran orangutan).